The chain runs to 310 residues: Ribonuclease Z (310 aa).

Zn(2+) is bound by residues His64, His66, Asp68, His69, His142, Asp213, and His271. The Proton acceptor role is filled by Asp68.

The protein belongs to the RNase Z family. In terms of assembly, homodimer. Zn(2+) is required as a cofactor.

It carries out the reaction Endonucleolytic cleavage of RNA, removing extra 3' nucleotides from tRNA precursor, generating 3' termini of tRNAs. A 3'-hydroxy group is left at the tRNA terminus and a 5'-phosphoryl group is left at the trailer molecule.. Zinc phosphodiesterase, which displays some tRNA 3'-processing endonuclease activity. Probably involved in tRNA maturation, by removing a 3'-trailer from precursor tRNA. This chain is Ribonuclease Z, found in Treponema pallidum (strain Nichols).